The chain runs to 607 residues: ATP-dependent DNA helicase II subunit 1 (607 aa).

The Ku domain maps to 241–452 (MDLGNDVRIG…IETMQRILRG (212 aa)). An SAP domain is found at 570 to 604 (IKALKVSQLKDILRDRGLRVSGKKADLLDNLTNYV).

It belongs to the ku70 family. As to quaternary structure, heterodimer of pku70 and pku80.

The protein resides in the nucleus. It localises to the chromosome. Its subcellular location is the telomere. It catalyses the reaction ATP + H2O = ADP + phosphate + H(+). Single-stranded DNA-dependent ATP-dependent helicase. Involved in non-homologous end joining (NHEJ) DNA double strand break repair. DNA-binding is sequence-independent but has a high affinity to nicks in double-stranded DNA and to the ends of duplex DNA. Binds to naturally occurring chromosomal ends, and therefore provides chromosomal end protection. Required also for telomere recombination to repair telomeric ends in the absence of telomerase. ku70, of the ku70/ku80 heterodimer, binds to the stem loop of tlc1, the RNA component of telomerase. Required for mating-type switching. Involved in telomere maintenance. Interacts with telomeric repeats and subtelomeric sequences thereby controlling telomere length and protecting against subtelomeric rearrangement. Maintains telomeric chromatin, which is involved in silencing the expression of genes located at the telomere. The protein is ATP-dependent DNA helicase II subunit 1 (pku70) of Schizosaccharomyces pombe (strain 972 / ATCC 24843) (Fission yeast).